Here is a 280-residue protein sequence, read N- to C-terminus: 1-cyclohexenylcarbonyl-CoA reductase (280 aa).

NADP(+) is bound by residues 22-25 (SRGI), 71-72 (DV), and Asn98. Active-site proton acceptor residues include Tyr158 and Lys165. NADP(+)-binding positions include Lys165 and 194 to 196 (IDS).

The protein belongs to the short-chain dehydrogenases/reductases (SDR) family. In terms of assembly, homodimer.

It catalyses the reaction (4R,5R)-4,5-dihydroxycyclohex-2-ene-1-carbonyl-CoA + NADP(+) = (3R,4R)-3,4-dihydroxycyclohexa-1,5-diene-1-carbonyl-CoA + NADPH + H(+). It carries out the reaction (3S)-3-hydroxycyclohexane-1-carbonyl-CoA + NADP(+) = (5S)-5-hydroxycyclohex-1-ene-1-carbonyl-CoA + NADPH + H(+). The catalysed reaction is cyclohexane-1-carbonyl-CoA + NADP(+) = cyclohex-1-ene-1-carbonyl-CoA + NADPH + H(+). Its pathway is antibiotic biosynthesis. Inhibited by the thiol inhibitors p-chloromercuribenzoate, N-ethylmaleimide and iodoacetamide. Also inhibited by various divalent cations. In terms of biological role, involved in the biosynthesis of the antifungal antibiotic ansatrienin A (mycotrienin I). Catalyzes three of the reductive steps involved in the formation of the cyclohexanecarboxylic acid (CHC) moiety of ansatrienin from shikimic acid. Can use 3,4-dihydroxycyclohexa-1,5-diene-1-carbonyl-CoA, 5-hydroxycyclohex-1-ene-1-carbonyl-CoA and cyclohex-1-ene-1-carbonyl-CoA as substrates. The sequence is that of 1-cyclohexenylcarbonyl-CoA reductase from Streptomyces collinus.